The primary structure comprises 122 residues: Large ribosomal subunit protein bL12 (122 aa).

The protein belongs to the bacterial ribosomal protein bL12 family. Homodimer. Part of the ribosomal stalk of the 50S ribosomal subunit. Forms a multimeric L10(L12)X complex, where L10 forms an elongated spine to which 2 to 4 L12 dimers bind in a sequential fashion. Binds GTP-bound translation factors.

Its function is as follows. Forms part of the ribosomal stalk which helps the ribosome interact with GTP-bound translation factors. Is thus essential for accurate translation. In Streptococcus sanguinis (strain SK36), this protein is Large ribosomal subunit protein bL12.